The chain runs to 394 residues: NAD(P)H-quinone oxidoreductase subunit H (394 aa).

Belongs to the complex I 49 kDa subunit family. As to quaternary structure, NDH-1 can be composed of about 15 different subunits; different subcomplexes with different compositions have been identified which probably have different functions.

The protein localises to the cellular thylakoid membrane. The enzyme catalyses a plastoquinone + NADH + (n+1) H(+)(in) = a plastoquinol + NAD(+) + n H(+)(out). It carries out the reaction a plastoquinone + NADPH + (n+1) H(+)(in) = a plastoquinol + NADP(+) + n H(+)(out). Its function is as follows. NDH-1 shuttles electrons from an unknown electron donor, via FMN and iron-sulfur (Fe-S) centers, to quinones in the respiratory and/or the photosynthetic chain. The immediate electron acceptor for the enzyme in this species is believed to be plastoquinone. Couples the redox reaction to proton translocation, and thus conserves the redox energy in a proton gradient. Cyanobacterial NDH-1 also plays a role in inorganic carbon-concentration. The sequence is that of NAD(P)H-quinone oxidoreductase subunit H from Prochlorococcus marinus (strain MIT 9303).